The following is a 523-amino-acid chain: Volkensin (523 aa).

Catalysis depends on residues Y74, Y113, E162, and R165. 111–113 (GGY) contacts AMP. 2 disulfides stabilise this stretch: C245–C269 and C285–C304. The propeptide at 251–265 (QSDSPLVIRSFVDRN) is linker peptide. One can recognise a Ricin B-type lectin 1 domain in the interval 270 to 397 (PSGETTAFIV…YAASQAWRVT (128 aa)). A carbohydrate is bound by residues 287 to 291 (DVKVE), Q300, K305, and N311. C328 and C343 are oxidised to a cystine. Residues N358 and N398 each coordinate a carbohydrate. N358 and N398 each carry an N-linked (GlcNAc...) asparagine glycan. The Ricin B-type lectin 2 domain maps to 400-523 (TVPTVTTIVG…HGNSNQQWFL (124 aa)). Cystine bridges form between C414/C427 and C453/C471.

The protein in the N-terminal section; belongs to the ribosome-inactivating protein family. Type 2 RIP subfamily. As to quaternary structure, disulfide-linked dimer of A and B chains. In terms of processing, N-glycosylated. Contains mannose and galactose. As to expression, expressed in roots (at protein level). Expressed in seeds (at protein level).

The enzyme catalyses Endohydrolysis of the N-glycosidic bond at one specific adenosine on the 28S rRNA.. With respect to regulation, hemagglutinating activity is inhibited by galactose and structurally related sugars. Its function is as follows. Has N-glycosidase activity and is responsible for inhibiting protein synthesis through the catalytic inactivation of 60S ribosomal subunits by removing a specific adenine of 28S rRNA. Inhibits GTP-dependent binding of EF2 (elongation factor 2) to ribosomes. In terms of biological role, binds to cell receptors and probably facilitates the entry into the cell of the A chain. Also acts as a galactose-specific lectin responsible for cell agglutination. The polypeptide is Volkensin (Adenia volkensii (Kilyambiti plant)).